Here is a 342-residue protein sequence, read N- to C-terminus: MRSTKTIHVISAHAEGEVGDVIVGGVAPPPGDTIWEQSRWIAREQTLRNFVLNEPRGGVFRHVNLLVPPKHPDADAAFIIMEPEDTPPMSGSNSICVSTVLLDSGILPMKEPVTEITLEAPGGLVRVRAECRDGKAERIFVENLPSFAERLDAKLEVEGLGTLTVDTAYGGDSFVIVDAAAMGFALKPDEAHDIARLGVRITNAANAKLGFHHPENPDWRHFSFCLFAGPVERTAEGLRAGAAVAIQPGKVDRSPTGTALSARMAVLHARGQMGLSDRLTAVSLIGSTFSGRILGTTEVGGRPAVLPEISGRAWITGTHQHMLDPSDPWPEGYRLTDTWGAR.

S90 acts as the Proton acceptor in catalysis. Residues G91 to S92, D252, and G257 to T258 contribute to the substrate site.

It belongs to the proline racemase family.

It carries out the reaction trans-3-hydroxy-L-proline = 1-pyrroline-2-carboxylate + H2O. Its function is as follows. Catalyzes the dehydration of trans-3-hydroxy-L-proline (t3LHyp) to Delta(1)-pyrroline-2-carboxylate (Pyr2C). Can also catalyze the epimerization of trans-4-hydroxy-L-proline (t4LHyp) to cis-4-hydroxy-D-proline (c4DHyp), albeit with 150-fold lower efficiency. May be involved in the degradation pathway that converts t3LHyp to L-proline, which would allow R.meliloti to grow on t3LHyp as a sole carbon source. Displays no proline racemase activity. The sequence is that of Trans-3-hydroxy-L-proline dehydratase from Rhizobium meliloti (strain 1021) (Ensifer meliloti).